The sequence spans 413 residues: Oxidoreductase vrtI (413 aa).

Residues 235-341 (DAESLTTLSM…RYSIAYFLRA (107 aa)) form the Fe2OG dioxygenase domain. Fe cation contacts are provided by His262, Asp264, and His319. 2-oxoglutarate is bound at residue Arg332.

It belongs to the iron/ascorbate-dependent oxidoreductase family.

The protein operates within secondary metabolite biosynthesis; terpenoid biosynthesis. Functionally, oxidoreductase; part of the gene cluster that mediates the biosynthesis of viridicatumtoxin, a tetracycline-like fungal meroterpenoid with a unique, fused spirobicyclic ring system. The first step of the pathway is the production of the malonamoyl-CoA starter unit for the polyketide synthase vrtA. The aldolase vrtJ may be involved in the synthesis of the malonamate substrate for malonamoyl-CoA synthetase vrtB. The polyketide synthase vrtA then may utilize the malonamoyl-CoA starter unit, followed by sequential condensation of eight malonyl-CoA units to form the polyketide backbone. The cyclization of the last ring could be mediated by the lactamase-like protein vrtG. The proposed post-PKS tailoring steps are a hydroxylation at C5 catalyzed the cytochrome P450 monooxygenase vrtE, a hydroxylation at C12a catalyzed by VrtH and/or VrtI, and an O-methylation by the O-methyltransferase vrtF. VrtC is then proposed to catalyze the transfer of a geranyl group synthesized by vrtD to the aromatic C ring of the tetracyclic polyketide intermediate of viridicatumtoxin to yield previridicatumtoxin. Finally, the cytochrome P450 monooxygenase vrtK catalyzes the spirocyclization of the geranyl moiety of previridicatumtoxin to afford viridicatumtoxin. The polypeptide is Oxidoreductase vrtI (Penicillium aethiopicum).